The following is a 393-amino-acid chain: Tryptophan synthase beta chain (393 aa).

Lysine 85 is subject to N6-(pyridoxal phosphate)lysine.

This sequence belongs to the TrpB family. In terms of assembly, tetramer of two alpha and two beta chains. It depends on pyridoxal 5'-phosphate as a cofactor.

The catalysed reaction is (1S,2R)-1-C-(indol-3-yl)glycerol 3-phosphate + L-serine = D-glyceraldehyde 3-phosphate + L-tryptophan + H2O. It functions in the pathway amino-acid biosynthesis; L-tryptophan biosynthesis; L-tryptophan from chorismate: step 5/5. Functionally, the beta subunit is responsible for the synthesis of L-tryptophan from indole and L-serine. The chain is Tryptophan synthase beta chain (trpB) from Helicobacter pylori (strain J99 / ATCC 700824) (Campylobacter pylori J99).